A 31-amino-acid chain; its full sequence is Cytochrome b6-f complex subunit 6 (31 aa).

Residues 4–26 (LTSYFGFLLAALTITSALFIGLS) form a helical membrane-spanning segment.

It belongs to the PetL family. The 4 large subunits of the cytochrome b6-f complex are cytochrome b6, subunit IV (17 kDa polypeptide, PetD), cytochrome f and the Rieske protein, while the 4 small subunits are PetG, PetL, PetM and PetN. The complex functions as a dimer.

It localises to the plastid. The protein resides in the chloroplast thylakoid membrane. Its function is as follows. Component of the cytochrome b6-f complex, which mediates electron transfer between photosystem II (PSII) and photosystem I (PSI), cyclic electron flow around PSI, and state transitions. PetL is important for photoautotrophic growth as well as for electron transfer efficiency and stability of the cytochrome b6-f complex. The sequence is that of Cytochrome b6-f complex subunit 6 from Aethionema cordifolium (Lebanon stonecress).